The following is a 619-amino-acid chain: Dihydroxy-acid dehydratase (619 aa).

Asp80 contributes to the Mg(2+) binding site. Cys121 serves as a coordination point for [2Fe-2S] cluster. Positions 122 and 123 each coordinate Mg(2+). The residue at position 123 (Lys123) is an N6-carboxylysine. Residue Cys196 participates in [2Fe-2S] cluster binding. A Mg(2+)-binding site is contributed by Glu492. The active-site Proton acceptor is the Ser518.

This sequence belongs to the IlvD/Edd family. As to quaternary structure, homodimer. The cofactor is [2Fe-2S] cluster. It depends on Mg(2+) as a cofactor.

The enzyme catalyses (2R)-2,3-dihydroxy-3-methylbutanoate = 3-methyl-2-oxobutanoate + H2O. It catalyses the reaction (2R,3R)-2,3-dihydroxy-3-methylpentanoate = (S)-3-methyl-2-oxopentanoate + H2O. It functions in the pathway amino-acid biosynthesis; L-isoleucine biosynthesis; L-isoleucine from 2-oxobutanoate: step 3/4. Its pathway is amino-acid biosynthesis; L-valine biosynthesis; L-valine from pyruvate: step 3/4. Functionally, functions in the biosynthesis of branched-chain amino acids. Catalyzes the dehydration of (2R,3R)-2,3-dihydroxy-3-methylpentanoate (2,3-dihydroxy-3-methylvalerate) into 2-oxo-3-methylpentanoate (2-oxo-3-methylvalerate) and of (2R)-2,3-dihydroxy-3-methylbutanoate (2,3-dihydroxyisovalerate) into 2-oxo-3-methylbutanoate (2-oxoisovalerate), the penultimate precursor to L-isoleucine and L-valine, respectively. This is Dihydroxy-acid dehydratase from Bifidobacterium adolescentis (strain ATCC 15703 / DSM 20083 / NCTC 11814 / E194a).